We begin with the raw amino-acid sequence, 130 residues long: MSNKSRKIRSRGGKRGVQKGVIHIQASFNNTIITVTDVRGQVIIWSSAGACGFKGTRKSTPFAAQAAAENAIKASVDRGMKQAEVMMSGPGPGRDTALRAIRRSGIILSFIRDVTPMPYNGCRPPRKRRV.

The protein belongs to the universal ribosomal protein uS11 family. Part of the 30S ribosomal subunit.

The protein resides in the plastid. It localises to the chloroplast. In Adiantum capillus-veneris (Maidenhair fern), this protein is Small ribosomal subunit protein uS11c.